Here is a 356-residue protein sequence, read N- to C-terminus: Histidinol-phosphate aminotransferase (356 aa).

Lys-210 carries the N6-(pyridoxal phosphate)lysine modification.

This sequence belongs to the class-II pyridoxal-phosphate-dependent aminotransferase family. Histidinol-phosphate aminotransferase subfamily. In terms of assembly, homodimer. Requires pyridoxal 5'-phosphate as cofactor.

The enzyme catalyses L-histidinol phosphate + 2-oxoglutarate = 3-(imidazol-4-yl)-2-oxopropyl phosphate + L-glutamate. Its pathway is amino-acid biosynthesis; L-histidine biosynthesis; L-histidine from 5-phospho-alpha-D-ribose 1-diphosphate: step 7/9. This Gluconacetobacter diazotrophicus (strain ATCC 49037 / DSM 5601 / CCUG 37298 / CIP 103539 / LMG 7603 / PAl5) protein is Histidinol-phosphate aminotransferase.